The following is a 276-amino-acid chain: F420-dependent methylenetetrahydromethanopterin dehydrogenase (276 aa).

This sequence belongs to the MTD family.

The enzyme catalyses 5,10-methylenetetrahydromethanopterin + oxidized coenzyme F420-(gamma-L-Glu)(n) + 2 H(+) = 5,10-methenyl-5,6,7,8-tetrahydromethanopterin + reduced coenzyme F420-(gamma-L-Glu)(n). The protein operates within one-carbon metabolism; methanogenesis from CO(2); 5,10-methylene-5,6,7,8-tetrahydromethanopterin from 5,10-methenyl-5,6,7,8-tetrahydromethanopterin (coenzyme F420 route): step 1/1. Catalyzes the reversible reduction of methenyl-H(4)MPT(+) to methylene-H(4)MPT. In Methanococcus vannielii (strain ATCC 35089 / DSM 1224 / JCM 13029 / OCM 148 / SB), this protein is F420-dependent methylenetetrahydromethanopterin dehydrogenase.